Reading from the N-terminus, the 606-residue chain is Aspartate--tRNA(Asp/Asn) ligase (606 aa).

Glu-177 contacts L-aspartate. Residues 201 to 204 (QIFK) form an aspartate region. Arg-223 is a binding site for L-aspartate. ATP contacts are provided by residues 223 to 225 (RDE) and Gln-232. His-461 is an L-aspartate binding site. Glu-499 lines the ATP pocket. Position 506 (Arg-506) interacts with L-aspartate. Residue 551 to 554 (GLDR) coordinates ATP.

The protein belongs to the class-II aminoacyl-tRNA synthetase family. Type 1 subfamily. In terms of assembly, homodimer.

It localises to the cytoplasm. The enzyme catalyses tRNA(Asx) + L-aspartate + ATP = L-aspartyl-tRNA(Asx) + AMP + diphosphate. In terms of biological role, aspartyl-tRNA synthetase with relaxed tRNA specificity since it is able to aspartylate not only its cognate tRNA(Asp) but also tRNA(Asn). Reaction proceeds in two steps: L-aspartate is first activated by ATP to form Asp-AMP and then transferred to the acceptor end of tRNA(Asp/Asn). The protein is Aspartate--tRNA(Asp/Asn) ligase of Prochlorococcus marinus (strain MIT 9211).